A 184-amino-acid polypeptide reads, in one-letter code: MIKELEDIFKEAEKDMKKAVEYYKNEIAGLRTSRASTALVEEIKVEYYGSKVPIKQLGTISVPEHNQIVIQVWDQNAVPAIEKAIREELNLNPTVQGNVIRVTLPPLTEERRRELVRLLHKITEEARVRVRNVRREAKEMIEELEGISEDEKKRALERLQKLTDKYIDEINKLMEAKEKEIMSV.

The protein belongs to the RRF family.

It localises to the cytoplasm. Functionally, responsible for the release of ribosomes from messenger RNA at the termination of protein biosynthesis. May increase the efficiency of translation by recycling ribosomes from one round of translation to another. The polypeptide is Ribosome-recycling factor (Aquifex aeolicus (strain VF5)).